Reading from the N-terminus, the 596-residue chain is M-phase inducer phosphatase (596 aa).

A phosphoserine mark is found at S99 and S178. A disordered region spans residues 174-221 (LSSSSFDSYLRPNVSRSRSSGNAPPFLRSRSSSSYSINKKKGTSGGQA). Positions 429-533 (IFDKCIIIDC…FYENHKNRCD (105 aa)) constitute a Rhodanese domain. The active-site Phosphocysteine intermediate is the C480.

The protein belongs to the MPI phosphatase family. Interacts with rad24 during G2 in a srk1-dependent manner; the interaction is increased during osmostress. In terms of processing, phosphorylated by srk1 in the N-terminus; phosphorylation promotes nuclear exclusion.

The protein localises to the cytoplasm. It is found in the nucleus. It catalyses the reaction O-phospho-L-tyrosyl-[protein] + H2O = L-tyrosyl-[protein] + phosphate. Its function is as follows. Tyrosine protein phosphatase which functions as a dosage-dependent inducer of mitotic and meiotic progression. Directly dephosphorylates cdc2 and stimulates its kinase activity. Required for the G2/M transition of the cell cycle. Required for induction of meiosis II. In Schizosaccharomyces pombe (strain 972 / ATCC 24843) (Fission yeast), this protein is M-phase inducer phosphatase.